A 484-amino-acid chain; its full sequence is Glutamate--tRNA ligase (484 aa).

The short motif at 11–21 (PSPTGLLHIGN) is the 'HIGH' region element. Positions 255–259 (KLSKR) match the 'KMSKS' region motif. ATP is bound at residue K258.

Belongs to the class-I aminoacyl-tRNA synthetase family. Glutamate--tRNA ligase type 1 subfamily. In terms of assembly, monomer.

The protein localises to the cytoplasm. It catalyses the reaction tRNA(Glu) + L-glutamate + ATP = L-glutamyl-tRNA(Glu) + AMP + diphosphate. Catalyzes the attachment of glutamate to tRNA(Glu) in a two-step reaction: glutamate is first activated by ATP to form Glu-AMP and then transferred to the acceptor end of tRNA(Glu). The sequence is that of Glutamate--tRNA ligase from Streptococcus agalactiae serotype V (strain ATCC BAA-611 / 2603 V/R).